The following is a 398-amino-acid chain: Tyrosine--tRNA ligase (398 aa).

The 'HIGH' region motif lies at 42-51 (PTAPDIHLGH). The 'KMSKS' region signature appears at 226–230 (KMSKS). Lys229 contributes to the ATP binding site. An S4 RNA-binding domain is found at 336-397 (LAIANLLKDA…GKRKFAKVTL (62 aa)).

It belongs to the class-I aminoacyl-tRNA synthetase family. TyrS type 2 subfamily. In terms of assembly, homodimer.

The protein localises to the cytoplasm. The enzyme catalyses tRNA(Tyr) + L-tyrosine + ATP = L-tyrosyl-tRNA(Tyr) + AMP + diphosphate + H(+). In terms of biological role, catalyzes the attachment of tyrosine to tRNA(Tyr) in a two-step reaction: tyrosine is first activated by ATP to form Tyr-AMP and then transferred to the acceptor end of tRNA(Tyr). The sequence is that of Tyrosine--tRNA ligase from Shewanella oneidensis (strain ATCC 700550 / JCM 31522 / CIP 106686 / LMG 19005 / NCIMB 14063 / MR-1).